The primary structure comprises 396 residues: MGAPSALPLLLLLACSWAPGGANLSQDDSQPWTSDETVVAGGTVVLKCQVKDHEDSSLQWSNPAQQTLYFGEKRALRDNRIQLVSSTPHELSISISNVALADEGEYTCSIFTMPVRTAKSLVTVLGIPQKPIITGYKSSLREKETATLNCQSSGSKPAAQLAWRKGDQELHGDQTRIQEDPNGKTFTVSSSVSFQVTRDDDGANVVCSVNHESLKGADRSTSQRIEVLYTPTAMIRPEPAHPREGQKLLLHCEGRGNPVPQQYVWVKEGSEPPLKMTQESALIFPFLNKSDSGTYGCTATSNMGSYTAYFTLNVNDPSPVPSSSSTYHAIIGGIVAFIVFLLLILLIFLGHYLIRHKGTYLTHEAKGSDDAPDADTAIINAEGGQSGGDDKKEYFI.

A signal peptide spans 1–22 (MGAPSALPLLLLLACSWAPGGA). One can recognise an Ig-like V-type domain in the interval 23–124 (NLSQDDSQPW…VRTAKSLVTV (102 aa)). The Extracellular segment spans residues 23–328 (NLSQDDSQPW…PVPSSSSTYH (306 aa)). 3 disulfides stabilise this stretch: Cys48-Cys108, Cys150-Cys207, and Cys252-Cys297. Ig-like C2-type domains are found at residues 128–226 (PQKP…QRIE) and 231–313 (PTAM…FTLN). Residue Asn288 is glycosylated (N-linked (GlcNAc...) asparagine). The helical transmembrane segment at 329–349 (AIIGGIVAFIVFLLLILLIFL) threads the bilayer. The Cytoplasmic portion of the chain corresponds to 350–396 (GHYLIRHKGTYLTHEAKGSDDAPDADTAIINAEGGQSGGDDKKEYFI). Residues 365–396 (AKGSDDAPDADTAIINAEGGQSGGDDKKEYFI) form a disordered region. Phosphoserine is present on Ser386.

This sequence belongs to the nectin family. In terms of assembly, homodimer. Can form trans-heterodimers with NECTIN3. Interacts with EPB41L1, DLG3, PALS2 and CASK.

It localises to the cell membrane. It is found in the cell junction. Its function is as follows. Involved in cell-cell adhesion. Has both calcium-independent homophilic cell-cell adhesion activity and calcium-independent heterophilic cell-cell adhesion activity with IGSF4, NECTIN1 and NECTIN3. Interaction with EPB41L1 may regulate structure or function of cell-cell junctions. In Rattus norvegicus (Rat), this protein is Cell adhesion molecule 3 (Cadm3).